The following is a 368-amino-acid chain: Agmatine deiminase (368 aa).

Cys-357 serves as the catalytic Amidino-cysteine intermediate.

This sequence belongs to the agmatine deiminase family. As to quaternary structure, homodimer.

The enzyme catalyses agmatine + H2O = N-carbamoylputrescine + NH4(+). The protein operates within amine and polyamine biosynthesis; putrescine biosynthesis via agmatine pathway; N-carbamoylputrescine from agmatine: step 1/1. Mediates the hydrolysis of agmatine into N-carbamoylputrescine in the arginine decarboxylase (ADC) pathway of putrescine biosynthesis, a basic polyamine. This is Agmatine deiminase from Pseudomonas putida (strain ATCC 47054 / DSM 6125 / CFBP 8728 / NCIMB 11950 / KT2440).